The chain runs to 323 residues: RING-H2 finger protein ATL32 (323 aa).

The N-terminal stretch at 1–28 (MMTRVECFNPHRWIILHVAIIIQSKANA) is a signal peptide. A helical transmembrane segment spans residues 47-67 (TTVFAVLVTLFFLTGLLSVYI). An RING-type; atypical zinc finger spans residues 124–166 (CAICLNELEDHETVRLLPICNHLFHIDCIDTWLYSHATCPVCR). Residues 210–229 (SSEISGKFPRSNSTGHSMDR) are disordered.

This sequence belongs to the RING-type zinc finger family. ATL subfamily.

It localises to the membrane. It catalyses the reaction S-ubiquitinyl-[E2 ubiquitin-conjugating enzyme]-L-cysteine + [acceptor protein]-L-lysine = [E2 ubiquitin-conjugating enzyme]-L-cysteine + N(6)-ubiquitinyl-[acceptor protein]-L-lysine.. The protein operates within protein modification; protein ubiquitination. The protein is RING-H2 finger protein ATL32 (ATL32) of Arabidopsis thaliana (Mouse-ear cress).